A 100-amino-acid chain; its full sequence is uncharacterized protein (100 aa).

Positions 8–100 (MKQSDDQIRA…TYLPGFLETL (93 aa)) constitute an HTH arsR-type domain. A DNA-binding region (H-T-H motif) is located at residues 44–67 (CGEVGEKCNIVKTTASYHFKTLRE).

This is an uncharacterized protein from Bacillus subtilis (strain 168).